A 715-amino-acid chain; its full sequence is Methionine--tRNA ligase (715 aa).

The 'HIGH' region signature appears at 20–30; it reads PYANGKAHIGH. Positions 151, 154, 163, and 167 each coordinate Zn(2+). Positions 334–338 match the 'KMSKS' region motif; the sequence is KFSKT. Lys337 provides a ligand contact to ATP. The segment at 559–593 is disordered; the sequence is ANAKRNGVKGGEKEPSKSEGMGPSEASKASEKTVD. The tRNA-binding domain occupies 613–715; sequence DFAKLDIRVG…KEIKSGSRIR (103 aa).

It belongs to the class-I aminoacyl-tRNA synthetase family. MetG type 1 subfamily. As to quaternary structure, homodimer. Requires Zn(2+) as cofactor.

Its subcellular location is the cytoplasm. It catalyses the reaction tRNA(Met) + L-methionine + ATP = L-methionyl-tRNA(Met) + AMP + diphosphate. In terms of biological role, is required not only for elongation of protein synthesis but also for the initiation of all mRNA translation through initiator tRNA(fMet) aminoacylation. The sequence is that of Methionine--tRNA ligase from Methanosarcina mazei (strain ATCC BAA-159 / DSM 3647 / Goe1 / Go1 / JCM 11833 / OCM 88) (Methanosarcina frisia).